Reading from the N-terminus, the 219-residue chain is Resolvase (219 aa).

A Resolvase/invertase-type recombinase catalytic domain is found at 15–159 (VARIYLRAST…EDRRERQRQG (145 aa)). The active-site O-(5'-phospho-DNA)-serine intermediate is the S23.

The protein belongs to the site-specific recombinase resolvase family.

Its function is as follows. Involved in plasmid partition. This Escherichia coli protein is Resolvase (parA).